A 438-amino-acid chain; its full sequence is Nudix hydrolase 19, chloroplastic (438 aa).

A chloroplast-targeting transit peptide spans 1-36 (MLALFLSSSSYPTLSFLSRSVTLNLARTTTLSALTM). The Zn(2+) site is built by cysteine 212, cysteine 215, cysteine 230, and cysteine 235. Substrate contacts are provided by residues tyrosine 240, 276–278 (AGF), glutamate 292, glutamate 296, and glutamate 342. The region spanning 241–371 (PRVDPVVIML…EYRKAQRTAA (131 aa)) is the Nudix hydrolase domain. Positions 276, 292, 296, and 342 each coordinate Mg(2+). The Nudix box signature appears at 277–298 (GFIEPGESLEEAVRRETWEETG). The Microbody targeting signal signature appears at 422-424 (PDD).

It belongs to the Nudix hydrolase family. NudC subfamily. Requires Mg(2+) as cofactor. Zn(2+) is required as a cofactor. In terms of tissue distribution, expressed in roots, leaves, stems and inflorescences.

Its subcellular location is the plastid. The protein resides in the chloroplast. It carries out the reaction a 5'-end NAD(+)-phospho-ribonucleoside in mRNA + H2O = a 5'-end phospho-adenosine-phospho-ribonucleoside in mRNA + beta-nicotinamide D-ribonucleotide + 2 H(+). It catalyses the reaction NAD(+) + H2O = beta-nicotinamide D-ribonucleotide + AMP + 2 H(+). The catalysed reaction is NADH + H2O = reduced beta-nicotinamide D-ribonucleotide + AMP + 2 H(+). In terms of biological role, mRNA decapping enzyme that specifically removes the nicotinamide adenine dinucleotide (NAD) cap from a subset of mRNAs by hydrolyzing the diphosphate linkage to produce nicotinamide mononucleotide (NMN) and 5' monophosphate mRNA. The NAD-cap is present at the 5'-end of some RNAs; in contrast to the canonical N7 methylguanosine (m7G) cap, the NAD cap promotes mRNA decay. Mediates the hydrolysis of some nucleoside diphosphate derivatives. Has a high affinity for NADPH compared with that for NADH. This is Nudix hydrolase 19, chloroplastic (NUDT19) from Arabidopsis thaliana (Mouse-ear cress).